The chain runs to 484 residues: Carbohydrate sulfotransferase 7 (484 aa).

Residues 1 to 12 are Cytoplasmic-facing; that stretch reads MKGRRRRRREYC. The chain crosses the membrane as a helical; Signal-anchor for type II membrane protein span at residues 13–33; it reads KFTLLLALYTLLLLLVPSVLD. At 34-484 the chain is on the lumenal side; the sequence is SHSEQDKGRN…PLETKANWAV (451 aa). The disordered stretch occupies residues 71–90; the sequence is RSLAEGNPDRSPGSPGNLSA. A glycan (N-linked (GlcNAc...) asparagine) is linked at N87. Residue 108–114 participates in 3'-phosphoadenylyl sulfate binding; that stretch reads WRTGSSF. An N-linked (GlcNAc...) asparagine glycan is attached at N184. 276 to 284 contacts 3'-phosphoadenylyl sulfate; sequence RDPRAVHNS. N405 carries N-linked (GlcNAc...) asparagine glycosylation. S460 is subject to Phosphoserine. A compositionally biased stretch (basic and acidic residues) spans 460-473; that stretch reads SGDERDRKTVREGE. Residues 460–484 are disordered; sequence SGDERDRKTVREGETPLETKANWAV.

It belongs to the sulfotransferase 1 family. Gal/GlcNAc/GalNAc subfamily. As to expression, widely expressed. Highly expressed in kidney. Expressed at lower level in heart, lung and liver.

The protein resides in the golgi apparatus membrane. It carries out the reaction chondroitin beta-D-glucuronate + n 3'-phosphoadenylyl sulfate = chondroitin 6'-sulfate + n adenosine 3',5'-bisphosphate + n H(+). Sulfotransferase that utilizes 3'-phospho-5'-adenylyl sulfate (PAPS) as sulfonate donor to catalyze the transfer of sulfate to position 6 of non-reducing N-acetylglucosamine (GlcNAc) residues. Preferentially acts on mannose-linked GlcNAc. Also able to catalyze the transfer of sulfate to position 6 of the N-acetylgalactosamine (GalNAc) residue of chondroitin. Also acts on core 2 mucin-type oligosaccharide and N-acetyllactosamine oligomer with a lower efficiency. Has weak or no activity toward keratan sulfate and oligosaccharides containing the Galbeta1-4GlcNAc. Catalyzes 6-O-sulfation of beta-benzyl GlcNAc but not alpha- or beta-benzyl GalNAc. This chain is Carbohydrate sulfotransferase 7 (Chst7), found in Mus musculus (Mouse).